The chain runs to 343 residues: Trans-enoyl reductase ACTTS2 (343 aa).

42 to 45 (GDWK) contributes to the NADP(+) binding site. 128-135 (VGITTVGQ) contacts substrate. NADP(+) contacts are provided by residues 162 to 165 (STAT), 185 to 188 (SPHN), and Tyr-203. Residue 268 to 272 (GYTAL) participates in substrate binding. NADP(+) is bound at residue 333–334 (VS).

This sequence belongs to the zinc-containing alcohol dehydrogenase family. Monomer.

It participates in mycotoxin biosynthesis. In terms of biological role, trans-enoyl reductase; part of the gene clusters that mediate the biosynthesis of the host-selective toxins (HSTs) ACT-toxins responsible for brown spot of tangerine disease by the tangerine pathotype which affects tangerines and mandarins. ACT-toxins consist of three moieties, 9,10-epoxy-8-hydroxy-9-methyl-decatrienoic acid (EDA), valine and a polyketide. ACT-toxin I is toxic to both citrus and pear; toxin II the 5''-deoxy derivative of ACT-toxin I, is highly toxic to pear and slightly toxic to citrus. On cellular level, ACT-toxins affect plasma membrane of susceptible cells and cause a sudden increase in loss of K(+) after a few minutes of toxin treatment. The acyl-CoA ligase ACTT1, the hydrolase ACTT2, the enoyl-CoA hydratases ACTT3 and ACTT6, and the acyl-CoA synthetase ACTT5 are all involved in the biosynthesis of the AK-, AF- and ACT-toxin common 9,10-epoxy-8-hydroxy-9-methyl-decatrienoic acid (EDA) structural moiety. The exact role of each enzyme, and of additional enzymes identified within the AF-toxin clusters have still to be determined. On the other hand, ACTTS1 to ACTTS4 are specific to the tangerine pathotype. The function of ACTTS3 is to elongate the polyketide chain portion of ACT-toxin that is unique to this toxin. The enoyl-reductase ACTTS2 might complement the missing enoyl-reductase (ER) domain in ACTTS3 in the synthesis of the polyketide portion of ACT-toxin. The roles of the nonribosomal peptide synthetases-related proteins ACTTS1 and ACTTS4 have also still not been elucidated. This chain is Trans-enoyl reductase ACTTS2, found in Alternaria alternata (Alternaria rot fungus).